The sequence spans 208 residues: Vacuolar ATPase assembly protein VMA12 (208 aa).

A2 is subject to N-acetylalanine. 2 helical membrane-spanning segments follow: residues 146 to 166 (LVITIFNFIVTVVAAFVCTYL) and 179 to 199 (VLAALIVASVVGLAELYVMVR).

As to quaternary structure, accessory component of the multisubunit proton-transporting vacuolar (V)-ATPase protein pump.

It localises to the cytoplasmic vesicle. It is found in the COPI-coated vesicle membrane. The protein resides in the endoplasmic reticulum-Golgi intermediate compartment membrane. The protein localises to the endoplasmic reticulum membrane. Accessory component of the proton-transporting vacuolar (V)-ATPase protein pump involved in intracellular iron homeostasis. In aerobic conditions, required for intracellular iron homeostasis, thus triggering the activity of Fe(2+) prolyl hydroxylase (PHD) enzymes, and leading to HIF1A hydroxylation and subsequent proteasomal degradation. Necessary for endolysosomal acidification and lysosomal degradation. May be involved in Golgi homeostasis. Binds 20(S)-hydroxycholesterol (20(S)-OHC). The chain is Vacuolar ATPase assembly protein VMA12 from Homo sapiens (Human).